The primary structure comprises 361 residues: Ribosomal RNA large subunit methyltransferase M (361 aa).

S-adenosyl-L-methionine contacts are provided by residues Ser-187, Cys-220–Gly-223, Asp-239, Asp-259, and Asp-276. The active-site Proton acceptor is Lys-305.

This sequence belongs to the class I-like SAM-binding methyltransferase superfamily. RNA methyltransferase RlmE family. RlmM subfamily. Monomer.

The protein resides in the cytoplasm. The enzyme catalyses cytidine(2498) in 23S rRNA + S-adenosyl-L-methionine = 2'-O-methylcytidine(2498) in 23S rRNA + S-adenosyl-L-homocysteine + H(+). Functionally, catalyzes the 2'-O-methylation at nucleotide C2498 in 23S rRNA. The chain is Ribosomal RNA large subunit methyltransferase M from Shewanella amazonensis (strain ATCC BAA-1098 / SB2B).